The sequence spans 562 residues: MSQSKYRQLDVRAPRGTTLTARSWLTEAPLRMLMNNLDPDVAENPHELVVYGGIGRAARNWECYDAIVKALKNLESDETLLVQSGKPVGVFKTHENSPRVLIANSNLVPHWATWEHFNELDAKGLAMYGQMTAGSWIYIGSQGIVQGTYETFVEAGRQHYQGSLKGRWVLTAGLGGMGGAQPLAATLAGACSLNIECQQSRIDFRLRTRYVDEQATSLDDALARIKKYTAEGRAISIALCGNAADIVPELVKRGVRPDMVTDQTSAHDPLHGYLPKGWSWEEYQQKAESDPQGTILAAKRSMADHVQAMLAFNEMGVPTFDYGNNIRQMAQEMGVSNAFDFPGFVPAYIRPLFCRGIGPFRWVALSGDPQDIYKTDAKVKEIIKDDKHLHHWLDMARERISFQGLPARICWVGLEWRQKLGLAFNEMVRSGEVSAPIVIGRDHLDSGSVASPNRETEAMRDGSDAVSDWPLLNALLNTASGATWVSLHHGGGVGMGFSQHSGMVIVCDGTDEAAARIARVLRNDPATGVMRHADAGYDIAIECAAEQGLNLPMVAATQGNAK.

NAD(+)-binding positions include 52–53 (GG), Gln130, 176–178 (GMG), Glu196, Arg201, 242–243 (NA), 263–267 (QTSAH), 273–274 (YL), and Tyr322. Cys410 is an active-site residue. Gly492 lines the NAD(+) pocket.

This sequence belongs to the urocanase family. NAD(+) serves as cofactor.

It localises to the cytoplasm. The catalysed reaction is 4-imidazolone-5-propanoate = trans-urocanate + H2O. It functions in the pathway amino-acid degradation; L-histidine degradation into L-glutamate; N-formimidoyl-L-glutamate from L-histidine: step 2/3. Functionally, catalyzes the conversion of urocanate to 4-imidazolone-5-propionate. This Klebsiella pneumoniae (strain 342) protein is Urocanate hydratase.